We begin with the raw amino-acid sequence, 568 residues long: MSNKNPLNNSNGSNSSTIVNSDKFLVKIHSLSVSHTSKSSNIYLVGDFDQFKQFKTETKKSSSTHGSCIYNEFAMEFQYETKYIHKLDHKHFKICVYKKKSIGSDKYIGSFGVDLYTLATGPISHDVVFQKDNTGVGRLQFRLEMNHITDIQISFKSILLSNLMKQSNYQIDYSLNKINPLKSSIIENTICPSWYNQSSILMNISLKDLVDGSIFFNLKDTKSSKVIGELKLPVKSIFSFVEGDIKIVKTLLYNEKQNKICDACIEIQFNNIPQLAQLRGGIQTEQGIRGAESFFSGVPLPKIIGEISNASTSDGYSKEAQLQHVKLPDGWESRIDPVSGKVFYLNHNNKTTSWISPLEHAPVKKRTPTVVISNTTILDNNNNNNNNNNNNNNNNNNNNNNINNTNNIQQKQQAQQQPVQPPPQPVQQQVQQPQQKEKEKEKEINAEDYKISRPKKTPATPEEAAVIIQRTFRNHKKQSYNKTIRNSKTIIPPNNVQQQQPQQTEKPSIYQVFGQQIDQGLPNGWEVRQDQFGRVFYVDHINRATTWTRPTVKHPKQHQQATLVQQRK.

The C2 domain maps to proline 6–phenylalanine 129. The 35-residue stretch at valine 325–glutamate 359 folds into the WW 1 domain. The interval threonine 376 to proline 461 is disordered. Positions asparagine 380–proline 418 are enriched in low complexity. A compositionally biased stretch (basic and acidic residues) spans glutamine 435 to isoleucine 451. The region spanning glutamine 519–valine 552 is the WW 2 domain.

Interacts with calmodulin in the absence of Ca(2+).

It is found in the nucleus. Its subcellular location is the nucleolus. The protein resides in the cytoplasm. The protein localises to the cell cortex. It localises to the cytoskeleton. Functionally, involved in regulation of actin cytoskeleton organization and cytokinesis. The protein is WW domain-containing protein A of Dictyostelium discoideum (Social amoeba).